The sequence spans 195 residues: Transcription factor LBX2 (195 aa).

Disordered regions lie at residues 1 to 89 (MNSV…KSRT) and 164 to 195 (PALPDSTSSPDPGPSGPDSEPNLSDEEIQVDD). Positions 84–143 (RRKSRTAFTAQQVLELERRFVFQKYLAPSERDGLAARLGLANAQVVTWFQNRRAKLKRDV) form a DNA-binding region, homeobox. The segment covering 186–195 (LSDEEIQVDD) has biased composition (acidic residues).

Expressed in the developing urogenital system, eye and brain.

The protein localises to the nucleus. In terms of biological role, transcription factor. This chain is Transcription factor LBX2 (Lbx2), found in Mus musculus (Mouse).